Consider the following 331-residue polypeptide: Putative type II secretion system C-type protein YghF (331 aa).

A helical membrane pass occupies residues 44–60 (MFWLMLLIISAKMAHSL).

This sequence belongs to the GSP C family.

It localises to the cell inner membrane. In terms of biological role, involved in a type II secretion system (T2SS, formerly general secretion pathway, GSP) for the export of folded proteins across the outer membrane. In Escherichia coli (strain K12), this protein is Putative type II secretion system C-type protein YghF.